We begin with the raw amino-acid sequence, 251 residues long: Flap endonuclease Xni (251 aa).

Asp104 contributes to the Mg(2+) binding site. Positions 160–249 constitute a 5'-3' exonuclease domain; it reads VQPQQLPDYW…IDGNLQQLRL (90 aa). 5 residues coordinate K(+): Leu171, Ala172, Pro180, Val182, and Ile185. Residues 184-189 form an interaction with DNA region; the sequence is GIGPKS.

The protein belongs to the Xni family. It depends on Mg(2+) as a cofactor. The cofactor is K(+).

In terms of biological role, has flap endonuclease activity. During DNA replication, flap endonucleases cleave the 5'-overhanging flap structure that is generated by displacement synthesis when DNA polymerase encounters the 5'-end of a downstream Okazaki fragment. The protein is Flap endonuclease Xni of Shigella flexneri serotype 5b (strain 8401).